The sequence spans 118 residues: Holo-[acyl-carrier-protein] synthase (118 aa).

The Mg(2+) site is built by aspartate 8 and glutamate 58.

Belongs to the P-Pant transferase superfamily. AcpS family. It depends on Mg(2+) as a cofactor.

The protein localises to the cytoplasm. The catalysed reaction is apo-[ACP] + CoA = holo-[ACP] + adenosine 3',5'-bisphosphate + H(+). Its function is as follows. Transfers the 4'-phosphopantetheine moiety from coenzyme A to a Ser of acyl-carrier-protein. The sequence is that of Holo-[acyl-carrier-protein] synthase from Streptococcus pyogenes serotype M5 (strain Manfredo).